The primary structure comprises 465 residues: MKPSLLVFTVYLLWLKDCHCAPTWKDKTDMHGNLKGFSEAGDIDVDEEVKKALIGMKQMKIMMERREEEHTNLMKTLKKCKEEKQEALKLMNEVQEHLEEEESLCQVSLTDSWDECKSCLESNCMRFHTTCQPSWSSMKNTVEQFFRNIYQYLFPFDEDNEKDLPVGEKFIEEDAQVAQIENVFNQLTVDVRFLFNRSLNVFKQMQQEFDQTFQSYFMSDTDLMQPNFLPALSKEPRKKADPVQSWDIPSFFQLFYNFSLSIYHSISTTITKTLNAIEDLPKQDNDSNHGSLSSKTLPVQHRGPYGEFGQNLSECFQFHARCQKCQDYLWEDCPDVPELHTKVDEALELVNISHQQYAQVLQMTQHHLEDTTYLMEKMREEFGWVADLANQAPGAENIFDSTKMVPNIHEGNFSKQDETMIDLSILSSPNFTLKIPLEESAETSNFISYMLEKAVQHFKKHFKTW.

The first 20 residues, 1 to 20 (MKPSLLVFTVYLLWLKDCHC), serve as a signal peptide directing secretion. The stretch at 62–106 (MMERREEEHTNLMKTLKKCKEEKQEALKLMNEVQEHLEEEESLCQ) forms a coiled coil. 4 cysteine pairs are disulfide-bonded: Cys-105-Cys-333, Cys-116-Cys-325, Cys-119-Cys-322, and Cys-124-Cys-315. N-linked (GlcNAc...) asparagine glycans are attached at residues Asn-196, Asn-257, Asn-285, Asn-311, Asn-351, Asn-412, and Asn-430.

This sequence belongs to the clusterin family. In terms of tissue distribution, retina-specific (at protein level). In the light-adapted retina, expressed in the outer segment of cone photoreceptors. In the dark-adapted retina, strongly expressed in the outer plexiform layer in the region of contact between the cone pedicles and second order neurons with little or no expression in the cone photoreceptor outer segments.

Its subcellular location is the secreted. The polypeptide is Clusterin-like protein 1 (CLUL1) (Canis lupus familiaris (Dog)).